We begin with the raw amino-acid sequence, 259 residues long: ATP synthase subunit a (259 aa).

Residues 1-10 constitute a propeptide, removed in mature form; sequence MFNLLNTYIT. Helical transmembrane passes span 36 to 56, 92 to 112, 125 to 145, 150 to 170, 191 to 211, and 216 to 236; these read LTTF…LYTL, WGLY…ANLI, LVFI…LGLY, VFFS…LLVI, ILAG…FMLI, and LVFG…EFAI.

This sequence belongs to the ATPase A chain family. F-type ATPases have 2 components, CF(1) - the catalytic core - and CF(0) - the membrane proton channel. In yeast, the dimeric form of ATP synthase consists of 17 polypeptides: alpha, beta, gamma, delta, epsilon, 4 (B), 5 (OSCP), 6 (A), 8, 9 (C), d, E (Tim11), f, g, h, i/j and k.

It localises to the mitochondrion inner membrane. In terms of biological role, mitochondrial membrane ATP synthase (F(1)F(0) ATP synthase or Complex V) produces ATP from ADP in the presence of a proton gradient across the membrane which is generated by electron transport complexes of the respiratory chain. F-type ATPases consist of two structural domains, F(1) - containing the extramembraneous catalytic core and F(0) - containing the membrane proton channel, linked together by a central stalk and a peripheral stalk. During catalysis, ATP synthesis in the catalytic domain of F(1) is coupled via a rotary mechanism of the central stalk subunits to proton translocation. Key component of the proton channel; it may play a direct role in the translocation of protons across the membrane. The sequence is that of ATP synthase subunit a (ATP6) from Saccharomyces cerevisiae (strain ATCC 204508 / S288c) (Baker's yeast).